The following is a 340-amino-acid chain: Ketol-acid reductoisomerase (NADP(+)) (340 aa).

A KARI N-terminal Rossmann domain is found at 1–182 (MRVYYDRDCD…GGGRSGIIET (182 aa)). Residues 24–27 (YGSQ), Arg48, Ser51, Ser53, and 83–86 (DELQ) contribute to the NADP(+) site. The active site involves His108. Gly134 serves as a coordination point for NADP(+). Positions 183 to 329 (NFREECETDL…AKLREMMPWI (147 aa)) constitute a KARI C-terminal knotted domain. Residues Asp191, Glu195, Glu227, and Glu231 each coordinate Mg(2+). Residue Ser252 participates in substrate binding.

Belongs to the ketol-acid reductoisomerase family. Requires Mg(2+) as cofactor.

It catalyses the reaction (2R)-2,3-dihydroxy-3-methylbutanoate + NADP(+) = (2S)-2-acetolactate + NADPH + H(+). The enzyme catalyses (2R,3R)-2,3-dihydroxy-3-methylpentanoate + NADP(+) = (S)-2-ethyl-2-hydroxy-3-oxobutanoate + NADPH + H(+). The protein operates within amino-acid biosynthesis; L-isoleucine biosynthesis; L-isoleucine from 2-oxobutanoate: step 2/4. Its pathway is amino-acid biosynthesis; L-valine biosynthesis; L-valine from pyruvate: step 2/4. Involved in the biosynthesis of branched-chain amino acids (BCAA). Catalyzes an alkyl-migration followed by a ketol-acid reduction of (S)-2-acetolactate (S2AL) to yield (R)-2,3-dihydroxy-isovalerate. In the isomerase reaction, S2AL is rearranged via a Mg-dependent methyl migration to produce 3-hydroxy-3-methyl-2-ketobutyrate (HMKB). In the reductase reaction, this 2-ketoacid undergoes a metal-dependent reduction by NADPH to yield (R)-2,3-dihydroxy-isovalerate. The polypeptide is Ketol-acid reductoisomerase (NADP(+)) (Ruegeria sp. (strain TM1040) (Silicibacter sp.)).